Here is a 149-residue protein sequence, read N- to C-terminus: 3-dehydroquinate dehydratase (149 aa).

Tyrosine 26 functions as the Proton acceptor in the catalytic mechanism. Positions 77, 83, and 90 each coordinate substrate. Catalysis depends on histidine 103, which acts as the Proton donor. Residues 104 to 105 (LS) and arginine 114 each bind substrate.

It belongs to the type-II 3-dehydroquinase family. As to quaternary structure, homododecamer.

It carries out the reaction 3-dehydroquinate = 3-dehydroshikimate + H2O. It participates in metabolic intermediate biosynthesis; chorismate biosynthesis; chorismate from D-erythrose 4-phosphate and phosphoenolpyruvate: step 3/7. In terms of biological role, catalyzes a trans-dehydration via an enolate intermediate. The sequence is that of 3-dehydroquinate dehydratase from Aliivibrio salmonicida (strain LFI1238) (Vibrio salmonicida (strain LFI1238)).